We begin with the raw amino-acid sequence, 289 residues long: MPKASHQDLRRSFRALTSSNSCFHTASVFDPMSAQIAADLGFEVGILGGSVASLQVLAAPDFALITLSEFVEQATRIGRVAQLPVIADADHGYGNALNVMRTVVELERAGISALTIEDTLLPAQFGRKSTDLISTAEGVGKIRAALEARVDPEMSIFARTNAAIIPVQEAISRVQQYQAAGADGITIVGIRDFDHLAQVSEGITVPLMLVTYGNPELHDNARLAEMGVRVCVHGHAAYFAAIKATYDCLREQRQILGSESNMSATELTHTYTQPEDYVEWAKKFMNVNE.

A substrate-binding site is contributed by S50. D88 contacts Mg(2+). R159 and H235 together coordinate substrate.

Belongs to the isocitrate lyase/PEP mutase superfamily. Oxaloacetate decarboxylase family. Homotetramer; dimer of dimers. It depends on Mg(2+) as a cofactor.

The enzyme catalyses oxaloacetate + H(+) = pyruvate + CO2. Its function is as follows. Catalyzes the decarboxylation of oxaloacetate into pyruvate. Seems to play a role in maintaining cellular concentrations of bicarbonate and pyruvate. The polypeptide is Oxaloacetate decarboxylase (Pseudomonas syringae pv. tomato (strain ATCC BAA-871 / DC3000)).